We begin with the raw amino-acid sequence, 581 residues long: Adenine deaminase (581 aa).

Belongs to the metallo-dependent hydrolases superfamily. Adenine deaminase family. It depends on Mn(2+) as a cofactor.

It carries out the reaction adenine + H2O + H(+) = hypoxanthine + NH4(+). This is Adenine deaminase from Brucella melitensis biotype 1 (strain ATCC 23456 / CCUG 17765 / NCTC 10094 / 16M).